Consider the following 1434-residue polypeptide: DNA-directed RNA polymerase subunit beta (1434 aa).

This sequence belongs to the RNA polymerase beta chain family. The RNAP catalytic core consists of 2 alpha, 1 beta, 1 beta' and 1 omega subunit. When a sigma factor is associated with the core the holoenzyme is formed, which can initiate transcription.

The catalysed reaction is RNA(n) + a ribonucleoside 5'-triphosphate = RNA(n+1) + diphosphate. DNA-dependent RNA polymerase catalyzes the transcription of DNA into RNA using the four ribonucleoside triphosphates as substrates. This Ureaplasma parvum serovar 3 (strain ATCC 700970) protein is DNA-directed RNA polymerase subunit beta.